A 114-amino-acid polypeptide reads, in one-letter code: Non-specific lipid-transfer protein 2 (114 aa).

The signal sequence occupies residues 1 to 23 (MEMVNKIACFVLLCMVVVAPHAE). Cystine bridges form between C27-C73, C37-C50, C51-C96, and C71-C110.

Belongs to the plant LTP family.

Plant non-specific lipid-transfer proteins transfer phospholipids as well as galactolipids across membranes. May play a role in wax or cutin deposition in the cell walls of expanding epidermal cells and certain secretory tissues. The polypeptide is Non-specific lipid-transfer protein 2 (LTP2) (Solanum pennellii (Tomato)).